The sequence spans 288 residues: Serpentine receptor class gamma-1 (288 aa).

7 consecutive transmembrane segments (helical) span residues 25 to 45, 59 to 79, 118 to 138, 148 to 168, 197 to 217, 238 to 258, and 268 to 288; these read LFLQ…VIYI, FYTI…FSIF, FQIL…LWPL, LKSI…TIAI, FSIL…TMLI, VYLS…FLVL, and ILHG…TYVM.

It belongs to the nematode receptor-like protein srg family.

The protein resides in the membrane. The polypeptide is Serpentine receptor class gamma-1 (srg-1) (Caenorhabditis elegans).